Consider the following 91-residue polypeptide: Defensin-like protein 95 (91 aa).

The signal sequence occupies residues 1–27; it reads MGSLKLSTFAIVVCLSILLISPIEVNG. 4 cysteine pairs are disulfide-bonded: Cys-31-Cys-76, Cys-38-Cys-63, Cys-47-Cys-73, and Cys-51-Cys-75.

It belongs to the DEFL family.

It localises to the secreted. This is Defensin-like protein 95 from Arabidopsis thaliana (Mouse-ear cress).